Here is a 120-residue protein sequence, read N- to C-terminus: UPF0102 protein TWT_455 (120 aa).

Belongs to the UPF0102 family.

This is UPF0102 protein TWT_455 from Tropheryma whipplei (strain Twist) (Whipple's bacillus).